A 401-amino-acid polypeptide reads, in one-letter code: Insertion element ISM1 uncharacterized 48.3 kDa protein (401 aa).

Its function is as follows. This polypeptide is involved in transposition, and should therefore bind to nucleic acids. The polypeptide is Insertion element ISM1 uncharacterized 48.3 kDa protein (Methanobrevibacter smithii).